Here is a 632-residue protein sequence, read N- to C-terminus: Sporulenol synthase (632 aa).

Aspartate 377 (proton donor) is an active-site residue. PFTB repeat units follow at residues 395–436 (WERG…EDAA), 465–505 (IQRA…HACG), and 513–554 (IQKA…VQTA).

This sequence belongs to the terpene cyclase/mutase family.

The protein localises to the cell membrane. The enzyme catalyses sporulenol = (R)-tetraprenyl-beta-curcumene + H2O. It functions in the pathway secondary metabolite biosynthesis; hopanoid biosynthesis. In terms of biological role, catalyzes the cyclization of tetraprenyl beta-curcumene into sporulenol. This Bacillus subtilis (strain 168) protein is Sporulenol synthase (sqhC).